The chain runs to 80 residues: uncharacterized protein (80 aa).

Residues 10-29 (FVAREYPLVVVPFIYFVLFL) traverse the membrane as a helical segment.

It localises to the membrane. This is an uncharacterized protein from Saccharomyces cerevisiae (strain ATCC 204508 / S288c) (Baker's yeast).